The chain runs to 417 residues: Lissencephaly-1 homolog (417 aa).

The region spanning 7–39 (QKEELNGAILDYFDSSGYKLTSTEFTKETNIEL) is the LisH domain. A coiled-coil region spans residues 52–80 (TSVIRLQKKVMDLEAKVSQLEEELNNGGR). The tract at residues 72 to 93 (EEELNNGGRGPARRGKEDALPR) is disordered. 7 WD repeats span residues 102 to 143 (GHRN…RTLK), 144 to 185 (GHTN…KTLH), 186 to 225 (GHDH…CTKT), 228 to 267 (GHED…CLLT), 270 to 339 (EHSH…CLQT), 342 to 383 (GHDN…KTIN), and 385 to 417 (AHSH…WKLG).

Belongs to the WD repeat LIS1/nudF family.

The protein resides in the cytoplasm. It is found in the cytoskeleton. The protein localises to the microtubule organizing center. Its subcellular location is the centrosome. Functionally, positively regulates the activity of the minus-end directed microtubule motor protein dynein. May enhance dynein-mediated microtubule sliding by targeting dynein to the microtubule plus end. Required for several dynein- and microtubule-dependent processes. This chain is Lissencephaly-1 homolog, found in Heterostelium pallidum (strain ATCC 26659 / Pp 5 / PN500) (Cellular slime mold).